The primary structure comprises 473 residues: GTPase Der (473 aa).

2 EngA-type G domains span residues 3-167 (FTVA…GKDR) and 203-378 (LRVA…RVWN). GTP-binding positions include 9–16 (GRPNVGKS), 56–60 (DTAGL), 119–122 (NKSE), 209–216 (GRPNAGKS), 256–260 (DTAGM), and 321–324 (NKWD). The KH-like domain maps to 379–463 (KRISTAKLNR…PIRIHFRSAE (85 aa)).

It belongs to the TRAFAC class TrmE-Era-EngA-EngB-Septin-like GTPase superfamily. EngA (Der) GTPase family. As to quaternary structure, associates with the 50S ribosomal subunit.

GTPase that plays an essential role in the late steps of ribosome biogenesis. This chain is GTPase Der, found in Rhizobium leguminosarum bv. trifolii (strain WSM2304).